A 248-amino-acid polypeptide reads, in one-letter code: Ureidoacrylate amidohydrolase RutB (248 aa).

Asp-41 acts as the Proton acceptor in catalysis. The active site involves Lys-150. Cys-183 functions as the Nucleophile in the catalytic mechanism.

Belongs to the isochorismatase family. RutB subfamily.

It catalyses the reaction (Z)-3-ureidoacrylate + H2O + H(+) = (Z)-3-aminoacrylate + NH4(+) + CO2. It carries out the reaction (Z)-3-ureidoacrylate + H2O = (Z)-3-aminoacrylate + carbamate + H(+). The catalysed reaction is (Z)-2-methylureidoacrylate + H2O + H(+) = (Z)-2-methylaminoacrylate + NH4(+) + CO2. Its function is as follows. Hydrolyzes ureidoacrylate to form aminoacrylate and carbamate. The carbamate hydrolyzes spontaneously, thereby releasing one of the nitrogen atoms of the pyrimidine ring as ammonia and one of its carbon atoms as CO2. In Methylorubrum extorquens (strain ATCC 14718 / DSM 1338 / JCM 2805 / NCIMB 9133 / AM1) (Methylobacterium extorquens), this protein is Ureidoacrylate amidohydrolase RutB.